Reading from the N-terminus, the 455-residue chain is tRNA modification GTPase MnmE (455 aa).

3 residues coordinate (6S)-5-formyl-5,6,7,8-tetrahydrofolate: R26, E86, and R125. The TrmE-type G domain maps to 222–376; the sequence is GLKTAIIGRP…VEEKINQIFF (155 aa). Position 232 (N232) interacts with K(+). GTP is bound by residues 232 to 237, 251 to 257, and 276 to 279; these read NVGKSS, TDIAGTT, and DTAG. S236 contacts Mg(2+). K(+)-binding residues include T251, I253, and T256. T257 serves as a coordination point for Mg(2+). K455 is a binding site for (6S)-5-formyl-5,6,7,8-tetrahydrofolate.

Belongs to the TRAFAC class TrmE-Era-EngA-EngB-Septin-like GTPase superfamily. TrmE GTPase family. Homodimer. Heterotetramer of two MnmE and two MnmG subunits. Requires K(+) as cofactor.

The protein resides in the cytoplasm. Exhibits a very high intrinsic GTPase hydrolysis rate. Involved in the addition of a carboxymethylaminomethyl (cmnm) group at the wobble position (U34) of certain tRNAs, forming tRNA-cmnm(5)s(2)U34. The protein is tRNA modification GTPase MnmE of Lactococcus lactis subsp. cremoris (strain MG1363).